Here is a 251-residue protein sequence, read N- to C-terminus: Triosephosphate isomerase (251 aa).

Substrate is bound at residue 9–11 (NWK). His95 functions as the Electrophile in the catalytic mechanism. Residue Glu167 is the Proton acceptor of the active site. Residues Gly173, Ser213, and 234-235 (GG) contribute to the substrate site.

The protein belongs to the triosephosphate isomerase family. In terms of assembly, homodimer.

It is found in the cytoplasm. The enzyme catalyses D-glyceraldehyde 3-phosphate = dihydroxyacetone phosphate. The protein operates within carbohydrate biosynthesis; gluconeogenesis. It participates in carbohydrate degradation; glycolysis; D-glyceraldehyde 3-phosphate from glycerone phosphate: step 1/1. Functionally, involved in the gluconeogenesis. Catalyzes stereospecifically the conversion of dihydroxyacetone phosphate (DHAP) to D-glyceraldehyde-3-phosphate (G3P). This is Triosephosphate isomerase from Lacticaseibacillus casei (strain BL23) (Lactobacillus casei).